A 992-amino-acid polypeptide reads, in one-letter code: Meckelin (992 aa).

The signal sequence occupies residues 1 to 36; the sequence is MVTRTRPVAAMAVRSRSSSRTGTAYLLLVLCEVSWA. The segment at 37–280 is cysteine-rich; sequence QIFSFPFRRP…FHYIFESTAG (244 aa). The Extracellular segment spans residues 37 to 516; that stretch reads QIFSFPFRRP…SVKYEMNQGD (480 aa). Disulfide bonds link C49–C62, C65–C78, C80–C97, C100–C114, C117–C127, C129–C150, C153–C170, C173–C184, C186–C197, C237–C246, C253–C268, and C354–C375. Residue N242 is glycosylated (N-linked (GlcNAc...) asparagine). Residues 517 to 545 form a helical membrane-spanning segment; sequence ASVHTDIALGVLGGLAVLSSLLKTAGWKR. The Cytoplasmic portion of the chain corresponds to 546-555; that stretch reads RVGSPMIDLQ. Residues 556–587 traverse the membrane as a helical segment; sequence TVMKFLLYYAGDLANVFFIITVGTGLYWLIFF. The Extracellular segment spans residues 588–600; sequence KAQKSVSVLLPMP. A helical transmembrane segment spans residues 601–628; sequence VQEERFVTYVGCAFAMKALQFLHKFISQ. The Cytoplasmic portion of the chain corresponds to 629–667; sequence ISIDIFFIDWERPKGKVLKAVEGEGGVRSATVPVSIWRT. The helical intramembrane region spans 668–676; that stretch reads YFVANEWNE. A discontinuously helical transmembrane segment spans residues 668–698; the sequence is YFVANEWNEIQTVRKINPLFQVLTTLFFLEV. Residues 677-685 lie within the membrane without spanning it; the sequence is IQTVRKINP. Residues 686–698 constitute an intramembrane region (helical); it reads LFQVLTTLFFLEV. The Extracellular segment spans residues 699-728; it reads VGFKNLALMDSSSSLSRNPSDYTAPYSRIL. Positions 729-754 form an intramembrane region, helical; it reads RYAVATAIWLVIGIIQVVFFAAFYER. A discontinuously helical membrane pass occupies residues 729 to 768; sequence RYAVATAIWLVIGIIQVVFFAAFYERFIEDKIRQFVDLCS. An intramembrane segment occupies 755-759; the sequence is FIEDK. Residues 760–768 constitute an intramembrane region (helical); that stretch reads IRQFVDLCS. The Cytoplasmic segment spans residues 769-923; the sequence is MSNVSVFLLS…SIFYNDEGHS (155 aa). An intramembrane region (helical) is located at residues 924-926; it reads FSS. Residues 924–949 form a discontinuously helical membrane-spanning segment; it reads FSSVLYYGNEATLLIFDLLFFCVVDL. Residues 927 to 933 lie within the membrane without spanning it; the sequence is VLYYGNE. Residues 934 to 949 constitute an intramembrane region (helical); the sequence is ATLLIFDLLFFCVVDL. The Extracellular portion of the chain corresponds to 950 to 954; the sequence is ACQDF. Residues 955 to 982 traverse the membrane as a helical segment; sequence VLASFLTYLQQEIFRFIRNTVGQKNLAT. The Cytoplasmic segment spans residues 983 to 992; the sequence is KTLVDERFLI.

As to quaternary structure, homodimer. Part of the tectonic-like complex (also named B9 complex). Interacts with DNAJB9, DNAJC10 and mutated SFTPC. Interacts with SYNE2 during the early establishment of cell polarity. Interacts (via C-terminus) with FLNA. Interacts with TMEM218. Interacts with WNT5A. Interacts with ROR2.

Its subcellular location is the cell membrane. It localises to the endoplasmic reticulum membrane. It is found in the cytoplasm. The protein resides in the cytoskeleton. The protein localises to the cilium basal body. Part of the tectonic-like complex which is required for tissue-specific ciliogenesis and may regulate ciliary membrane composition. Involved in centrosome migration to the apical cell surface during early ciliogenesis. Required for ciliary structure and function, including a role in regulating length and appropriate number through modulating centrosome duplication. Is a key regulator of stereociliary bundle orientation. Required for epithelial cell branching morphology. Essential for endoplasmic reticulum-associated degradation (ERAD) of surfactant protein C (sftpc). Involved in the negative regulation of canonical Wnt signaling, and activation of the non-canonical cascade stimulated by WNT5A. In non-canonical Wnt signaling, it may act as ROR2 coreceptor. The chain is Meckelin (Tmem67) from Mus musculus (Mouse).